Here is a 473-residue protein sequence, read N- to C-terminus: FAD-dependent monooxygeanse terM (473 aa).

A signal peptide spans 1-22; sequence MSENFKVLIIGGSVAGLTLALC. Positions 34, 48, 107, 303, and 316 each coordinate FAD. Residues 441-461 form a helical membrane-spanning segment; sequence VLYLICGALLAWWASGLVWHF.

The protein belongs to the paxM FAD-dependent monooxygenase family. FAD is required as a cofactor.

The protein resides in the membrane. It functions in the pathway secondary metabolite biosynthesis. Functionally, FAD-dependent monooxygeanse; part of the gene cluster that mediates the biosynthesis of terpendoles, indole-diterpene (IDT) mycotoxins including terpendole I, terpendole K, terpendole C, as well as the kinesin Eg5 inhibitor terpendole E. Terpendoles biosynthesis begins with the synthesis of geranylgeranyl diphosphate (GGPP) by a yet unidentified GGPP synthase. Condensation of indole-3-glycerol phosphate with GGPP by the prenyltransferase terC then forms 3-geranylgeranylindole (3-GGI), followed by epoxidation and cyclization of this intermediate (by the FAD-dependent monooxygeanse terM and the terpene cyclase terB) to form paspaline. The cytochrome monooxygenase terQ then hydroxylates paspalline at C-11 to yield terpendole E. The cytochrome monooxygenase terP converts terpendole E to 13-desoxyterpendole I, and terQ converts 13-desoxyterpendole I into terpendole I. TerF and terK are required for conversion of terpendole I to terpendole C which is further converted to terpendole K. This Tolypocladium album (Soil fungus) protein is FAD-dependent monooxygeanse terM.